The sequence spans 413 residues: Peptidase T (413 aa).

A Zn(2+)-binding site is contributed by His84. Residue Asp86 is part of the active site. Asp147 is a Zn(2+) binding site. The active-site Proton acceptor is the Glu181. Residues Glu182, Asp204, and His386 each coordinate Zn(2+).

It belongs to the peptidase M20B family. Zn(2+) is required as a cofactor.

It is found in the cytoplasm. The enzyme catalyses Release of the N-terminal residue from a tripeptide.. Its function is as follows. Cleaves the N-terminal amino acid of tripeptides. The polypeptide is Peptidase T (Ligilactobacillus salivarius (strain UCC118) (Lactobacillus salivarius)).